Here is a 669-residue protein sequence, read N- to C-terminus: Dynamin-related protein 4C (669 aa).

Residues 1-21 (MVKKKVATKKNSPSLAIAKKK) form a disordered region. A Dynamin-type G domain is found at 62-323 (GIHLPTIVVV…QSSMIARCLP (262 aa)). The G1 motif stretch occupies residues 72–79 (GDQSSGKS). GTP is bound at residue 72–79 (GDQSSGKS). Residues 97–99 (CTR) form a G2 motif region. The tract at residues 171-174 (DLPG) is G3 motif. Residues 171-175 (DLPGI) and 240-243 (TKAD) each bind GTP. Positions 240-243 (TKAD) are G4 motif. A region of interest (G5 motif) is located at residue Glu273. Residues 575 to 669 (AFDMKMRITS…AVAAIVDQNC (95 aa)) enclose the GED domain.

This sequence belongs to the TRAFAC class dynamin-like GTPase superfamily. Dynamin/Fzo/YdjA family.

The protein localises to the cytoplasm. Its subcellular location is the cytoskeleton. Its function is as follows. Putative microtubule-associated force-producing protein, able to bind and hydrolyze GTP. The polypeptide is Dynamin-related protein 4C (DRP4C) (Arabidopsis thaliana (Mouse-ear cress)).